The chain runs to 335 residues: Glucose-dependent insulinotropic receptor (335 aa).

At 1-12 (MESSFSFGVILA) the chain is on the extracellular side. The chain crosses the membrane as a helical span at residues 13–33 (VLASLIIATNTLVAVAVLLLI). Topologically, residues 34–37 (HKND) are cytoplasmic. Residues 38-58 (GVSLCFTLNLAVADTLIGVAI) form a helical membrane-spanning segment. At 59-81 (SGLLTDQLSSPSRPTQKTLCSLR) the chain is on the extracellular side. The chain crosses the membrane as a helical span at residues 82–102 (MAFVTSSAAASVLTVMLITFD). Over 103–125 (RYLAIKQPFRYLKIMSGFVAGAC) the chain is Cytoplasmic. A helical membrane pass occupies residues 126–146 (IAGLWLVSYLIGFLPLGIPMF). Residues 147–164 (QQTAYKGQCSFFAVFHPH) are Extracellular-facing. A helical membrane pass occupies residues 165–185 (FVLTLSCVGFFPAMLLFVFFY). Residues 186–226 (CDMLKIASMHSQQIRKMEHAGAMAGGYRSPRTPSDFKALRT) are Cytoplasmic-facing. A helical transmembrane segment spans residues 227-247 (VSVLIGSFALSWTPFLITGIV). Residues 248 to 262 (QVACQECHLYLVLER) are Extracellular-facing. The chain crosses the membrane as a helical span at residues 263 to 283 (YLWLLGVGNSLLNPLIYAYWQ). Residues 284-335 (KEVRLQLYHMALGVKKVLTSFLLFLSARNCGPERPRESSCHIVTISSSEFDG) are Cytoplasmic-facing.

It belongs to the G-protein coupled receptor 1 family. As to expression, predominantly expressed in the pancreas, especially in the islets.

Its subcellular location is the cell membrane. Its function is as follows. Receptor for the endogenous fatty-acid ethanolamide oleoylethanolamide (OEA) and lysophosphatidylcholine (LPC). Functions as a glucose-dependent insulinotropic receptor. The activity of this receptor is mediated by G proteins which activate adenylate cyclase. Seems to act through a G(s) mediated pathway. This is Glucose-dependent insulinotropic receptor (GPR119) from Homo sapiens (Human).